Here is a 249-residue protein sequence, read N- to C-terminus: tRNA(Phe) (4-demethylwyosine(37)-C(7)) aminocarboxypropyltransferase (249 aa).

Residues serine 80, arginine 87, glutamate 127, and 154-155 each bind S-adenosyl-L-methionine; that span reads DN.

The protein belongs to the class I-like SAM-binding methyltransferase superfamily. TRM5/TYW2 family.

It localises to the cytoplasm. It carries out the reaction 4-demethylwyosine(37) in tRNA(Phe) + S-adenosyl-L-methionine = 4-demethyl-7-[(3S)-3-amino-3-carboxypropyl]wyosine(37) in tRNA(Phe) + S-methyl-5'-thioadenosine + H(+). In terms of biological role, S-adenosyl-L-methionine-dependent transferase that acts as a component of the wyosine derivatives biosynthesis pathway. Catalyzes the transfer of the alpha-amino-alpha-carboxypropyl (acp) group from S-adenosyl-L-methionine to 4-demethylwyosine (imG-14), forming 7-aminocarboxypropyl-demethylwyosine (wybutosine-86) at position 37 of tRNA(Phe). This Methanocaldococcus jannaschii (strain ATCC 43067 / DSM 2661 / JAL-1 / JCM 10045 / NBRC 100440) (Methanococcus jannaschii) protein is tRNA(Phe) (4-demethylwyosine(37)-C(7)) aminocarboxypropyltransferase.